The sequence spans 628 residues: Biosynthetic arginine decarboxylase (628 aa).

Residue lysine 99 is modified to N6-(pyridoxal phosphate)lysine. Substrate is bound at residue 279 to 289; it reads VDVGGGLGIDY.

Belongs to the Orn/Lys/Arg decarboxylase class-II family. SpeA subfamily. Mg(2+) is required as a cofactor. It depends on pyridoxal 5'-phosphate as a cofactor.

It catalyses the reaction L-arginine + H(+) = agmatine + CO2. In terms of biological role, catalyzes the biosynthesis of agmatine from arginine. This is Biosynthetic arginine decarboxylase from Xanthomonas axonopodis pv. citri (strain 306).